The sequence spans 232 residues: 7-cyano-7-deazaguanine synthase (232 aa).

7 to 17 (CSGGLDSVSLA) lines the ATP pocket. Residues C185, C193, C196, and C199 each coordinate Zn(2+).

This sequence belongs to the QueC family. Requires Zn(2+) as cofactor.

The enzyme catalyses 7-carboxy-7-deazaguanine + NH4(+) + ATP = 7-cyano-7-deazaguanine + ADP + phosphate + H2O + H(+). It functions in the pathway purine metabolism; 7-cyano-7-deazaguanine biosynthesis. Functionally, catalyzes the ATP-dependent conversion of 7-carboxy-7-deazaguanine (CDG) to 7-cyano-7-deazaguanine (preQ(0)). This Brucella anthropi (strain ATCC 49188 / DSM 6882 / CCUG 24695 / JCM 21032 / LMG 3331 / NBRC 15819 / NCTC 12168 / Alc 37) (Ochrobactrum anthropi) protein is 7-cyano-7-deazaguanine synthase.